Consider the following 167-residue polypeptide: MAPINPDLQNVQDDIKNVIQDLFQVLVQVSNYDAAGRPTRDVLAQDIQTLDKTLHTLHTNAQHLPTPTADKPIPEPLIQYVENGRNPDIYTREFAELVRRMNQLARGKMHAFRDFRDVLAREMESALPELRADVQMVVGATGGRTVGGEGEGAGQGEGGEGRGEGGN.

A compositionally biased stretch (gly residues) spans threonine 141–glycine 158. Residues threonine 141 to asparagine 167 form a disordered region.

This sequence belongs to the Mediator complex subunit 10 family. As to quaternary structure, component of the Mediator complex.

It is found in the nucleus. Its function is as follows. Component of the Mediator complex, a coactivator involved in the regulated transcription of nearly all RNA polymerase II-dependent genes. Mediator functions as a bridge to convey information from gene-specific regulatory proteins to the basal RNA polymerase II transcription machinery. Mediator is recruited to promoters by direct interactions with regulatory proteins and serves as a scaffold for the assembly of a functional preinitiation complex with RNA polymerase II and the general transcription factors. This is Mediator of RNA polymerase II transcription subunit 10 (NUT2) from Chaetomium globosum (strain ATCC 6205 / CBS 148.51 / DSM 1962 / NBRC 6347 / NRRL 1970) (Soil fungus).